The chain runs to 297 residues: CASP-like protein 2U8 (297 aa).

Over 1 to 10 (MLELYEKRRA) the chain is Cytoplasmic. The chain crosses the membrane as a helical span at residues 11–31 (LLLLRLAAMFLSLAALLITVL). Over 32-64 (NREDGFFSINVFGSPQPILAKATADFTLVKGLK) the chain is Extracellular. Residues 65 to 85 (FFAGAMGIVAGYSFLQLAIAM) traverse the membrane as a helical segment. Topologically, residues 86–101 (ASIFSGAPSILGGKRM) are cytoplasmic. The chain crosses the membrane as a helical span at residues 102-122 (AWLCFVGDMTASHLCAAAAAV). Residues 123 to 148 (SAQLAYLGKRGAPMWSAVCTYFSHYC) lie on the Extracellular side of the membrane. Residues 149–169 (LVFGLAVILAFLATLAALLVA) traverse the membrane as a helical segment. The Cytoplasmic segment spans residues 170–297 (SISSYHLAYD…RVLEMETPCK (128 aa)).

The protein belongs to the Casparian strip membrane proteins (CASP) family. As to quaternary structure, homodimer and heterodimers.

Its subcellular location is the cell membrane. The protein is CASP-like protein 2U8 of Selaginella moellendorffii (Spikemoss).